The chain runs to 143 residues: MAYKHILVAVDLSPESQVLVRKAVSMAKPDNAKVSLIHVDVNYSDLYTGLIDVNLGDMQQRISEETRSALKALSADSAYDIQETLSGSGDLGQVLVDAIKKYGIDMVVCGHHQDFWSKLMSSARQLINTVHVDMLIVPLRDDE.

Belongs to the universal stress protein A family. In terms of assembly, homodimer.

It is found in the cytoplasm. Its function is as follows. Required for resistance to DNA-damaging agents. In Photorhabdus laumondii subsp. laumondii (strain DSM 15139 / CIP 105565 / TT01) (Photorhabdus luminescens subsp. laumondii), this protein is Universal stress protein A (uspA).